The following is a 360-amino-acid chain: DNA replication and repair protein RecF (360 aa).

Residue 33-40 (GENGSGKT) coordinates ATP.

It belongs to the RecF family.

Its subcellular location is the cytoplasm. The RecF protein is involved in DNA metabolism; it is required for DNA replication and normal SOS inducibility. RecF binds preferentially to single-stranded, linear DNA. It also seems to bind ATP. This is DNA replication and repair protein RecF from Rickettsia typhi (strain ATCC VR-144 / Wilmington).